Here is a 184-residue protein sequence, read N- to C-terminus: ATP-dependent protease subunit HslV (184 aa).

T12 is a catalytic residue. The Na(+) site is built by A166, C169, and T172.

This sequence belongs to the peptidase T1B family. HslV subfamily. In terms of assembly, a double ring-shaped homohexamer of HslV is capped on each side by a ring-shaped HslU homohexamer. The assembly of the HslU/HslV complex is dependent on binding of ATP.

It localises to the cytoplasm. The catalysed reaction is ATP-dependent cleavage of peptide bonds with broad specificity.. Its activity is regulated as follows. Allosterically activated by HslU binding. Its function is as follows. Protease subunit of a proteasome-like degradation complex believed to be a general protein degrading machinery. This is ATP-dependent protease subunit HslV from Nitrobacter winogradskyi (strain ATCC 25391 / DSM 10237 / CIP 104748 / NCIMB 11846 / Nb-255).